Here is an 87-residue protein sequence, read N- to C-terminus: Large ribosomal subunit protein eL31 (87 aa).

It belongs to the eukaryotic ribosomal protein eL31 family.

In Methanoculleus marisnigri (strain ATCC 35101 / DSM 1498 / JR1), this protein is Large ribosomal subunit protein eL31.